The sequence spans 301 residues: MKIGVLSQFPELYSTRRLVEACESRGHEAWVINPINCYMNINSVKPSIHLEGEEVPMFDAIIPRIHASVTFYGCAVVRQFEMMGVFAANDSISIARSRDKLRALQLLSRKGIGMPVTGFANKPNNIPDLINMVGGAPLVIKLLEGTQGIGVVLAETRKAAESVIEAFLGLKANIMVQEYIKEANGSDIRCFVVGDKVVAAMRRQGPEGDFRSNLHLGGSAEPVKITPQERKSAVAAAKAMGLVVAGVDILRSARGPLVLEVNSAPGIEGIEQATGIKVAEPIVEYIEKVVAARRANHQVIA.

In terms of domain architecture, ATP-grasp spans 104-287; it reads LQLLSRKGIG…VAEPIVEYIE (184 aa). Residues Lys-141, 178 to 179, Asp-187, and 211 to 213 each bind ATP; these read EY and RSN. Residues Asp-248, Glu-260, and Asn-262 each coordinate Mg(2+). Residues Asp-248, Glu-260, and Asn-262 each coordinate Mn(2+).

Belongs to the RimK family. Requires Mg(2+) as cofactor. The cofactor is Mn(2+).

The protein is Probable alpha-L-glutamate ligase 2 of Shewanella amazonensis (strain ATCC BAA-1098 / SB2B).